Consider the following 130-residue polypeptide: Cholecystokinin (130 aa).

Positions 1 to 20 (MYIGICICVLLAALSASSTG) are cleaved as a signal peptide. Residues 21 to 60 (QQTVGSMNEDPGAREIEQQNILQHPRHIRASSSAQLKPFQ) constitute a propeptide that is removed on maturation. Residue Tyr112 is modified to Sulfotyrosine. A Phenylalanine amide modification is found at Phe118. Residues 122–130 (SAEEYEYSS) constitute a propeptide that is removed on maturation. 2 positions are modified to sulfotyrosine: Tyr126 and Tyr128.

It belongs to the gastrin/cholecystokinin family. The precursor is cleaved by proteases to produce a number of active cholecystokinins. Expressed in brain, lung, testis and throughout the length of the small intestine. In the brain, expressed predominantly in the optic tectum and brain stem.

Its subcellular location is the secreted. This peptide hormone induces gall bladder contraction and the release of pancreatic enzymes in the gut. Its function in the brain is not clear. The polypeptide is Cholecystokinin (CCK) (Aquarana catesbeiana (American bullfrog)).